The primary structure comprises 737 residues: Catalase-peroxidase (737 aa).

The signal sequence occupies residues 1-23 (MLKKILPVLITLAIVHNTPTAWA). Residues 102–223 (WHGAGTYRIY…LAATQMGLIY (122 aa)) constitute a cross-link (tryptophyl-tyrosyl-methioninium (Trp-Tyr) (with M-249)). Residue H103 is the Proton acceptor of the active site. Positions 223 to 249 (YVNPEGPNGKPDPVAAAKDIREAFARM) form a cross-link, tryptophyl-tyrosyl-methioninium (Tyr-Met) (with W-102). H264 contributes to the heme b binding site.

Belongs to the peroxidase family. Peroxidase/catalase subfamily. As to quaternary structure, homodimer or homotetramer. The cofactor is heme b. Formation of the three residue Trp-Tyr-Met cross-link is important for the catalase, but not the peroxidase activity of the enzyme.

The catalysed reaction is H2O2 + AH2 = A + 2 H2O. It carries out the reaction 2 H2O2 = O2 + 2 H2O. Bifunctional enzyme with both catalase and broad-spectrum peroxidase activity. In Yersinia pseudotuberculosis serotype O:3 (strain YPIII), this protein is Catalase-peroxidase.